A 325-amino-acid polypeptide reads, in one-letter code: Retinal homeobox protein Rx-B (325 aa).

The Octapeptide motif motif lies at 32–39; sequence HSIEAILG. A compositionally biased stretch (basic and acidic residues) spans 75–87; that stretch reads TEEIHPQQEHLED. The tract at residues 75-136 is disordered; sequence TEEIHPQQEH…KKKHRRNRTT (62 aa). Positions 99-117 are enriched in polar residues; sequence AKTSSECLSPGLSTSNSDN. Positions 130–189 form a DNA-binding region, homeobox; it reads HRRNRTTFTTYQLHELERAFEKSHYPDVYSREELAMKVNLPEVRVQVWFQNRRAKWRRQE. An OAR motif is present at residues 302-315; sequence NSIASLRMKAKEHI. Residues 308–312 carry the Nuclear localization signal motif; that stretch reads RMKAK.

It belongs to the paired homeobox family. Bicoid subfamily. Highly expressed in anterior neural plate followed by neural retina, pigmented epithelium, in pineal gland, diencephalon floor and epiphysis. At later stages, the neuroretina remains the primary site of expression. No expression in the developing lens and cornea.

It localises to the nucleus. Its function is as follows. Plays a critical role in eye formation by regulating the initial specification of retinal cells and/or their subsequent proliferation. This is Retinal homeobox protein Rx-B (rax-b) from Xenopus laevis (African clawed frog).